A 206-amino-acid polypeptide reads, in one-letter code: Ribosomal RNA large subunit methyltransferase E (206 aa).

S-adenosyl-L-methionine-binding residues include Gly-63, Trp-65, Asp-83, Asp-99, and Asp-124. Lys-164 serves as the catalytic Proton acceptor.

This sequence belongs to the class I-like SAM-binding methyltransferase superfamily. RNA methyltransferase RlmE family.

Its subcellular location is the cytoplasm. The enzyme catalyses uridine(2552) in 23S rRNA + S-adenosyl-L-methionine = 2'-O-methyluridine(2552) in 23S rRNA + S-adenosyl-L-homocysteine + H(+). Functionally, specifically methylates the uridine in position 2552 of 23S rRNA at the 2'-O position of the ribose in the fully assembled 50S ribosomal subunit. The chain is Ribosomal RNA large subunit methyltransferase E from Buchnera aphidicola subsp. Schizaphis graminum (strain Sg).